The sequence spans 240 residues: TATA-box-binding protein (240 aa).

The disordered stretch occupies residues 21–61 (NTRQVWENQNRDGTKPATTFQSEEDIKRAAPESEKDTSATS). The segment covering 44–57 (EDIKRAAPESEKDT) has biased composition (basic and acidic residues). 2 consecutive repeat copies span residues 67 to 143 (LQNI…ARII) and 157 to 234 (IQNI…YPVL).

It belongs to the TBP family. Binds DNA as monomer. The 1.2 MDa TFIID complex is composed of TATA binding protein (TBP) and the 14 TBP-associated factors. One copy of each TAF1, TAF2, TAF3, TAF7, TAF8, TAF11, TAF13, two copies of each TAF4, TAF5, TAF6, TAF9, TAF10, TAF12, and three copies of TAF14. Interacts with TFC8.

It is found in the nucleus. General transcription factor that functions at the core of the DNA-binding general transcription factor complex TFIID. Binding of TFIID to a promoter (with or without TATA element) is the initial step in preinitiation complex (PIC) formation. TFIID plays a key role in the regulation of gene expression by RNA polymerase II through different activities such as transcription activator interaction, core promoter recognition and selectivity, TFIIA and TFIIB interaction, chromatin modification (histone acetylation by TAF1), facilitation of DNA opening and initiation of transcription. The protein is TATA-box-binding protein (SPT15) of Saccharomyces cerevisiae (strain ATCC 204508 / S288c) (Baker's yeast).